The following is a 210-amino-acid chain: Thymidylate kinase (210 aa).

11 to 18 (GLEGAGKS) contributes to the ATP binding site.

Belongs to the thymidylate kinase family.

The catalysed reaction is dTMP + ATP = dTDP + ADP. Phosphorylation of dTMP to form dTDP in both de novo and salvage pathways of dTTP synthesis. In Histophilus somni (strain 129Pt) (Haemophilus somnus), this protein is Thymidylate kinase.